Consider the following 167-residue polypeptide: uncharacterized protein (167 aa).

Positions P9–L167 constitute an N-acetyltransferase domain.

Belongs to the acetyltransferase family.

This is an uncharacterized protein from Escherichia coli (strain K12).